Consider the following 457-residue polypeptide: Gustatory and odorant receptor 24 (457 aa).

Residues 1–115 are Cytoplasmic-facing; it reads MSLYFNADTM…GGTAFVLASP (115 aa). Residues 116–136 traverse the membrane as a helical segment; it reads SMTYCVLFFLLLTVYIAFILL. The Extracellular portion of the chain corresponds to 137–152; sequence NRIEIVRTLEGRFEES. A helical membrane pass occupies residues 153 to 173; the sequence is VIAYLFIVNILPILIIPLMWY. Residues 174-209 lie on the Cytoplasmic side of the membrane; that stretch reads ESRKVVSVVNGWVDFETVYRETTGRALELRLRTKAQ. Residues 210 to 230 traverse the membrane as a helical segment; the sequence is VIAILLPILCSLSVAITHVTM. Residues 231–237 are Extracellular-facing; the sequence is VDFKLLQ. Residues 238 to 258 traverse the membrane as a helical segment; sequence VIPYCVLDTITYMMGGYWYMA. Over 259–309 the chain is Cytoplasmic; that stretch reads CETLSITAKILAEDFQRALRHVGPAAKVSEYRSLWLRLSKLARDTGFSTCY. Residues 310–330 traverse the membrane as a helical segment; it reads TFTFICLYLFFIITLSIYGLM. The Extracellular portion of the chain corresponds to 331–341; the sequence is SQISDGFGVKD. A helical membrane pass occupies residues 342–362; it reads IGLAVTAFCSVGLLFYICDEA. The Cytoplasmic portion of the chain corresponds to 363-421; that stretch reads HYASFNVRTNFQKKLLMVELSWMNTDAQTEINMFLRATEMNPSSINLGGFFDVNRTLFK. The helical transmembrane segment at 422–442 threads the bilayer; that stretch reads SLLATMVTYLVVLLQFQISIP. Over 443–457 the chain is Extracellular; sequence DEPSAMLMHSNSSHS. Asn-453 carries N-linked (GlcNAc...) asparagine glycosylation.

Belongs to the insect chemoreceptor superfamily. Gustatory receptor (GR) family. Gr21a subfamily. In terms of tissue distribution, carbon dioxide-responsive neurons coexpress GPRgr22 and GPRgr24 in the maxillary palp, at both larval and adult life stages.

It localises to the cell membrane. Functionally, gustatory receptor which mediates acceptance or avoidance behavior, depending on its substrates. GPRgr22 and GPRgr24 together are sufficient for olfactory carbon dioxide-chemosensation. This chain is Gustatory and odorant receptor 24, found in Anopheles gambiae (African malaria mosquito).